We begin with the raw amino-acid sequence, 62 residues long: U-myrmeciitoxin(01)-Mg3a (62 aa).

Positions 1–24 (MKTTVILLLAIAIIFAIMTTLTSA) are cleaved as a signal peptide.

As to expression, expressed by the venom gland.

It localises to the secreted. May have antimicrobial properties, like most ant linear peptides. This Myrmecia gulosa (Red bulldog ant) protein is U-myrmeciitoxin(01)-Mg3a.